The sequence spans 163 residues: Phosphopantetheine adenylyltransferase (163 aa).

Position 10 (serine 10) interacts with substrate. ATP-binding positions include 10-11 (SF) and histidine 18. Substrate-binding residues include lysine 42, leucine 74, and arginine 88. ATP contacts are provided by residues 89–91 (GLR), glutamate 99, and 124–130 (YSFLSSS).

Belongs to the bacterial CoaD family. Homohexamer. The cofactor is Mg(2+).

It is found in the cytoplasm. It carries out the reaction (R)-4'-phosphopantetheine + ATP + H(+) = 3'-dephospho-CoA + diphosphate. The protein operates within cofactor biosynthesis; coenzyme A biosynthesis; CoA from (R)-pantothenate: step 4/5. In terms of biological role, reversibly transfers an adenylyl group from ATP to 4'-phosphopantetheine, yielding dephospho-CoA (dPCoA) and pyrophosphate. The polypeptide is Phosphopantetheine adenylyltransferase (Bacillus anthracis (strain A0248)).